The chain runs to 287 residues: MISNVLKRASVLARSNGIQSAFYTTTAKTEASSSPQMKIKTAEKKDHFVNFQVYRYNEETTAKPYIQTYNINLKDCGPMVLDALLLIKNNIDPTLSFRRSCREGICGSCAMNLNGSNTLACTKKITDCLSGDTVKVYPLPHMHVVRDLIPDLSHFYTQHKSIKPWLEPAVDVPRYNGKEILQSKENRHKLDGLYECILCACCSTSCPSYWWSEGGDGGYLGPAVLLQAYRWIADSRDSIQKDRLAILSEDQMKVYKCHTIMNCTAVCPKGLNPGKSIANIKYLLAHN.

The transit peptide at 1 to 23 directs the protein to the mitochondrion; it reads MISNVLKRASVLARSNGIQSAFY. In terms of domain architecture, 2Fe-2S ferredoxin-type spans 51 to 140; that stretch reads FQVYRYNEET…GDTVKVYPLP (90 aa). 4 residues coordinate [2Fe-2S] cluster: Cys-101, Cys-106, Cys-109, and Cys-121. One can recognise a 4Fe-4S ferredoxin-type domain in the interval 186–216; it reads NRHKLDGLYECILCACCSTSCPSYWWSEGGD. Positions 196, 199, and 202 each coordinate [4Fe-4S] cluster. Cys-206 contributes to the [3Fe-4S] cluster binding site. Trp-211 is a binding site for a ubiquinone. Residues Cys-257 and Cys-263 each contribute to the [3Fe-4S] cluster site. Cys-267 contributes to the [4Fe-4S] cluster binding site.

Belongs to the succinate dehydrogenase/fumarate reductase iron-sulfur protein family. In terms of assembly, component of complex II composed of four subunits: the flavoprotein (FP) SDHA, iron-sulfur protein (IP) SDHB, and a cytochrome b composed of a large and a small subunit. The cofactor is [2Fe-2S] cluster. [3Fe-4S] cluster serves as cofactor. Requires [4Fe-4S] cluster as cofactor.

It localises to the mitochondrion inner membrane. It catalyses the reaction a quinone + succinate = fumarate + a quinol. The protein operates within carbohydrate metabolism; tricarboxylic acid cycle; fumarate from succinate (eukaryal route): step 1/1. Its function is as follows. Iron-sulfur protein (IP) subunit of succinate dehydrogenase (SDH) that is involved in complex II of the mitochondrial electron transport chain and is responsible for transferring electrons from succinate to ubiquinone (coenzyme Q). In Dictyostelium discoideum (Social amoeba), this protein is Succinate dehydrogenase [ubiquinone] iron-sulfur subunit, mitochondrial (sdhB).